Here is a 239-residue protein sequence, read N- to C-terminus: tRNA (guanine-N(7)-)-methyltransferase (239 aa).

S-adenosyl-L-methionine contacts are provided by glutamate 69, glutamate 94, aspartate 121, and aspartate 144. Aspartate 144 is an active-site residue. Position 148 (lysine 148) interacts with substrate. Residues 150 to 155 (RHNKRR) are interaction with RNA. Substrate is bound by residues aspartate 180 and 217 to 220 (TKFE).

The protein belongs to the class I-like SAM-binding methyltransferase superfamily. TrmB family. In terms of assembly, monomer.

The enzyme catalyses guanosine(46) in tRNA + S-adenosyl-L-methionine = N(7)-methylguanosine(46) in tRNA + S-adenosyl-L-homocysteine. It participates in tRNA modification; N(7)-methylguanine-tRNA biosynthesis. Its function is as follows. Catalyzes the formation of N(7)-methylguanine at position 46 (m7G46) in tRNA. The sequence is that of tRNA (guanine-N(7)-)-methyltransferase from Shigella flexneri serotype 5b (strain 8401).